The primary structure comprises 370 residues: MSGDFLALAQPGVQQLSPYVPGKPVDELARELDIDPATIVKLASNENPLGASPKALAAIRDELAELTRYPDGNGFALKSLLAERCGVEIDQVTLGNGSNDILELVARAYLAPGLNAVFSEHAFAVYPIVTQAVGAQARVVPAKNWGHDLPAMLKAIDDRTRVVFIANPNNPTGTWFGAEELDEFLQDVPAHVLVVLDEAYIEYAEGSDLPDGLDFLAAYPNLLVSRTFSKAYGLAALRVGYGLSTPVVADVLNRVRQPFNVNSLALAAACAALEDVDYLAESRRLNEAGMQQLEAGFRDLGLRWIPSKGNFIAVDLGREAAPIFQELLREGVIVRPVANYGMPNHLRITIGLPAENTRFLEALAKVLARA.

Position 230 is an N6-(pyridoxal phosphate)lysine (Lys-230).

The protein belongs to the class-II pyridoxal-phosphate-dependent aminotransferase family. Histidinol-phosphate aminotransferase subfamily. Homodimer. Pyridoxal 5'-phosphate is required as a cofactor.

The catalysed reaction is L-histidinol phosphate + 2-oxoglutarate = 3-(imidazol-4-yl)-2-oxopropyl phosphate + L-glutamate. It participates in amino-acid biosynthesis; L-histidine biosynthesis; L-histidine from 5-phospho-alpha-D-ribose 1-diphosphate: step 7/9. The sequence is that of Histidinol-phosphate aminotransferase 2 from Pseudomonas fluorescens (strain ATCC BAA-477 / NRRL B-23932 / Pf-5).